A 353-amino-acid polypeptide reads, in one-letter code: Methylthioribose-1-phosphate isomerase (353 aa).

Substrate contacts are provided by residues 48–50, Arg94, and Gln201; that span reads RGA. Asp242 (proton donor) is an active-site residue. 252-253 contacts substrate; sequence NK.

The protein belongs to the eIF-2B alpha/beta/delta subunits family. MtnA subfamily.

It catalyses the reaction 5-(methylsulfanyl)-alpha-D-ribose 1-phosphate = 5-(methylsulfanyl)-D-ribulose 1-phosphate. The protein operates within amino-acid biosynthesis; L-methionine biosynthesis via salvage pathway; L-methionine from S-methyl-5-thio-alpha-D-ribose 1-phosphate: step 1/6. Its function is as follows. Catalyzes the interconversion of methylthioribose-1-phosphate (MTR-1-P) into methylthioribulose-1-phosphate (MTRu-1-P). This is Methylthioribose-1-phosphate isomerase from Roseiflexus sp. (strain RS-1).